A 122-amino-acid polypeptide reads, in one-letter code: Small ribosomal subunit protein bS16 (122 aa).

A disordered region spans residues arginine 85–glutamate 122. Over residues arginine 99–lysine 110 the composition is skewed to basic and acidic residues. Residues alanine 111–glutamate 122 show a composition bias toward low complexity.

The protein belongs to the bacterial ribosomal protein bS16 family.

In Rhizobium etli (strain ATCC 51251 / DSM 11541 / JCM 21823 / NBRC 15573 / CFN 42), this protein is Small ribosomal subunit protein bS16.